The following is a 429-amino-acid chain: D-amino acid dehydrogenase (429 aa).

3 to 17 (VLILGSGVIGVTSAW) provides a ligand contact to FAD.

The protein belongs to the DadA oxidoreductase family. FAD is required as a cofactor.

It catalyses the reaction a D-alpha-amino acid + A + H2O = a 2-oxocarboxylate + AH2 + NH4(+). Functionally, oxidative deamination of D-amino acids. The polypeptide is D-amino acid dehydrogenase (Xanthomonas axonopodis pv. citri (strain 306)).